The following is a 414-amino-acid chain: Putative gustatory receptor 47b (414 aa).

At Met1–Asp5 the chain is on the cytoplasmic side. Residues Gly6–Ile26 form a helical membrane-spanning segment. The Extracellular portion of the chain corresponds to Arg27–Arg40. A helical transmembrane segment spans residues Trp41–Val61. The Cytoplasmic segment spans residues Met62–Lys142. The helical transmembrane segment at Tyr143 to Phe163 threads the bilayer. Over Asp164–Tyr182 the chain is Extracellular. Residues Thr183–Ile203 form a helical membrane-spanning segment. Over Arg204–Gly249 the chain is Cytoplasmic. A helical membrane pass occupies residues Val250–Val270. The Extracellular portion of the chain corresponds to Tyr271–Leu291. The chain crosses the membrane as a helical span at residues Leu292 to Leu312. Over Arg313–Ser364 the chain is Cytoplasmic. Residues Thr365–Phe385 form a helical membrane-spanning segment. Residues Gln386–Asp414 lie on the Extracellular side of the membrane.

Belongs to the insect chemoreceptor superfamily. Gustatory receptor (GR) family. Gr57a subfamily. In terms of tissue distribution, expressed in neurons of the terminal external chemosensory organ of larvae.

It is found in the cell membrane. Functionally, probable gustatory receptor which mediates acceptance or avoidance behavior, depending on its substrates. The protein is Putative gustatory receptor 47b (Gr47b) of Drosophila melanogaster (Fruit fly).